The chain runs to 527 residues: Peptide chain release factor 3 (527 aa).

Positions 9–277 (AKRRTFAIIS…AVVDWAPRPL (269 aa)) constitute a tr-type G domain. GTP is bound by residues 18 to 25 (SHPDAGKT), 86 to 90 (DTPGH), and 140 to 143 (NKLD).

This sequence belongs to the TRAFAC class translation factor GTPase superfamily. Classic translation factor GTPase family. PrfC subfamily.

It localises to the cytoplasm. Increases the formation of ribosomal termination complexes and stimulates activities of RF-1 and RF-2. It binds guanine nucleotides and has strong preference for UGA stop codons. It may interact directly with the ribosome. The stimulation of RF-1 and RF-2 is significantly reduced by GTP and GDP, but not by GMP. This chain is Peptide chain release factor 3, found in Pseudomonas fluorescens (strain SBW25).